A 561-amino-acid chain; its full sequence is Efflux pump bfoC (561 aa).

The tract at residues 1-55 (MSDTARILGGPSASSSRDGGMELNSFTEVSQTNSRSHSTKEEEGQVDDQQRPARE) is disordered. Polar residues predominate over residues 24–36 (NSFTEVSQTNSRS). Residues 38-55 (STKEEEGQVDDQQRPARE) are compositionally biased toward basic and acidic residues. The next 13 helical transmembrane spans lie at 59-79 (GVLG…CIFC), 103-123 (DVGW…LTFG), 128-148 (FFPI…GSFI), 164-184 (VAGL…SQCV), 194-214 (GFIM…GGAF), 222-242 (WCFY…LFTF), 257-277 (AVGL…CLLL), 293-313 (VVAL…LQLW), 335-355 (LYGF…PIWF), 378-398 (VVFA…GPFM), 425-445 (IGYQ…PIFV), 457-477 (TATA…VSVA), and 530-550 (VHTF…ATVI).

Belongs to the major facilitator superfamily. TCR/Tet family.

It is found in the cell membrane. Functionally, efflux pump; part of the gene cluster that mediates the biosynthesis of bifonsecin B, a dimeric gamma-naphthopyrone. This Aspergillus brasiliensis (strain CBS 101740 / IMI 381727 / IBT 21946) protein is Efflux pump bfoC.